The chain runs to 496 residues: Aspartyl/glutamyl-tRNA(Asn/Gln) amidotransferase subunit B (496 aa).

Belongs to the GatB/GatE family. GatB subfamily. As to quaternary structure, heterotrimer of A, B and C subunits.

The enzyme catalyses L-glutamyl-tRNA(Gln) + L-glutamine + ATP + H2O = L-glutaminyl-tRNA(Gln) + L-glutamate + ADP + phosphate + H(+). It catalyses the reaction L-aspartyl-tRNA(Asn) + L-glutamine + ATP + H2O = L-asparaginyl-tRNA(Asn) + L-glutamate + ADP + phosphate + 2 H(+). Functionally, allows the formation of correctly charged Asn-tRNA(Asn) or Gln-tRNA(Gln) through the transamidation of misacylated Asp-tRNA(Asn) or Glu-tRNA(Gln) in organisms which lack either or both of asparaginyl-tRNA or glutaminyl-tRNA synthetases. The reaction takes place in the presence of glutamine and ATP through an activated phospho-Asp-tRNA(Asn) or phospho-Glu-tRNA(Gln). This Natronomonas pharaonis (strain ATCC 35678 / DSM 2160 / CIP 103997 / JCM 8858 / NBRC 14720 / NCIMB 2260 / Gabara) (Halobacterium pharaonis) protein is Aspartyl/glutamyl-tRNA(Asn/Gln) amidotransferase subunit B.